A 283-amino-acid chain; its full sequence is ATP phosphoribosyltransferase (283 aa).

This sequence belongs to the ATP phosphoribosyltransferase family. Long subfamily. Requires Mg(2+) as cofactor.

The protein resides in the cytoplasm. The enzyme catalyses 1-(5-phospho-beta-D-ribosyl)-ATP + diphosphate = 5-phospho-alpha-D-ribose 1-diphosphate + ATP. It participates in amino-acid biosynthesis; L-histidine biosynthesis; L-histidine from 5-phospho-alpha-D-ribose 1-diphosphate: step 1/9. With respect to regulation, feedback inhibited by histidine. Catalyzes the condensation of ATP and 5-phosphoribose 1-diphosphate to form N'-(5'-phosphoribosyl)-ATP (PR-ATP). Has a crucial role in the pathway because the rate of histidine biosynthesis seems to be controlled primarily by regulation of HisG enzymatic activity. The sequence is that of ATP phosphoribosyltransferase from Bifidobacterium longum (strain NCC 2705).